Reading from the N-terminus, the 640-residue chain is 1-deoxy-D-xylulose-5-phosphate synthase (640 aa).

Thiamine diphosphate contacts are provided by residues His79 and 120 to 122 (GHS). Residue Asp151 coordinates Mg(2+). Thiamine diphosphate-binding positions include 152–153 (GS), Asn180, Tyr290, and Glu372. Residue Asn180 coordinates Mg(2+).

The protein belongs to the transketolase family. DXPS subfamily. As to quaternary structure, homodimer. Mg(2+) serves as cofactor. Thiamine diphosphate is required as a cofactor.

It catalyses the reaction D-glyceraldehyde 3-phosphate + pyruvate + H(+) = 1-deoxy-D-xylulose 5-phosphate + CO2. It functions in the pathway metabolic intermediate biosynthesis; 1-deoxy-D-xylulose 5-phosphate biosynthesis; 1-deoxy-D-xylulose 5-phosphate from D-glyceraldehyde 3-phosphate and pyruvate: step 1/1. Its function is as follows. Catalyzes the acyloin condensation reaction between C atoms 2 and 3 of pyruvate and glyceraldehyde 3-phosphate to yield 1-deoxy-D-xylulose-5-phosphate (DXP). This Rhodopseudomonas palustris (strain BisA53) protein is 1-deoxy-D-xylulose-5-phosphate synthase.